The chain runs to 913 residues: DNA mismatch repair protein MutS (913 aa).

An ATP-binding site is contributed by 720–727; the sequence is GPNASGKS.

Belongs to the DNA mismatch repair MutS family.

This protein is involved in the repair of mismatches in DNA. It is possible that it carries out the mismatch recognition step. This protein has a weak ATPase activity. The polypeptide is DNA mismatch repair protein MutS (Prochlorococcus marinus (strain AS9601)).